The chain runs to 389 residues: Alanine racemase (389 aa).

The active-site Proton acceptor; specific for D-alanine is Lys-46. Lys-46 carries the post-translational modification N6-(pyridoxal phosphate)lysine. Residue Arg-144 coordinates substrate. The active-site Proton acceptor; specific for L-alanine is Tyr-275. Met-323 serves as a coordination point for substrate.

This sequence belongs to the alanine racemase family. Pyridoxal 5'-phosphate serves as cofactor.

The enzyme catalyses L-alanine = D-alanine. It functions in the pathway amino-acid biosynthesis; D-alanine biosynthesis; D-alanine from L-alanine: step 1/1. Catalyzes the interconversion of L-alanine and D-alanine. May also act on other amino acids. The polypeptide is Alanine racemase (alr) (Mycolicibacterium smegmatis (strain ATCC 700084 / mc(2)155) (Mycobacterium smegmatis)).